Consider the following 313-residue polypeptide: Pre-mRNA-splicing factor 38A (313 aa).

Residues 1 to 179 (MANRTVKDAN…VLEEAELLDP (179 aa)) are N-terminal protein interaction domain. Residues 172–201 (EEAELLDPRISALEEDLDEVETSEEEDDED) adopt a coiled-coil conformation. Residues 182 to 313 (SALEEDLDEV…SHKRSRRGNE (132 aa)) form a disordered region. The span at 184–202 (LEEDLDEVETSEEEDDEDE) shows a compositional bias: acidic residues. Basic and acidic residues predominate over residues 203–224 (KPERMQSPEPHRRSYRDMDRPR). Basic residues-rich tracts occupy residues 225–250 (RSPSPRYRRSRSPRRRSRSPKRRSPS), 260–294 (HRSKSPRRHRSRSRERRHRSKSPGHHRSHRHRSHS), and 302–313 (KKSHKRSRRGNE).

The protein belongs to the PRP38 family. In terms of assembly, component of the spliceosome B complex.

It localises to the nucleus. Involved in pre-mRNA splicing as a component of the spliceosome. This chain is Pre-mRNA-splicing factor 38A (prpf38a), found in Danio rerio (Zebrafish).